A 405-amino-acid polypeptide reads, in one-letter code: Bifunctional enzyme IspD/IspF (405 aa).

The segment at 1-246 (MLQMPSKQPI…KLSASLLPDV (246 aa)) is 2-C-methyl-D-erythritol 4-phosphate cytidylyltransferase. The interval 247–405 (RTGNGYDVHQ…TATVVYRGRT (159 aa)) is 2-C-methyl-D-erythritol 2,4-cyclodiphosphate synthase. A divalent metal cation-binding residues include aspartate 253 and histidine 255. Residues 253-255 (DVH) and 279-280 (HS) contribute to the 4-CDP-2-C-methyl-D-erythritol 2-phosphate site. Position 287 (histidine 287) interacts with a divalent metal cation. Residues 301–303 (DIG), 377–380 (TTNE), phenylalanine 384, and arginine 387 contribute to the 4-CDP-2-C-methyl-D-erythritol 2-phosphate site.

It in the N-terminal section; belongs to the IspD/TarI cytidylyltransferase family. IspD subfamily. In the C-terminal section; belongs to the IspF family. It depends on a divalent metal cation as a cofactor.

The enzyme catalyses 2-C-methyl-D-erythritol 4-phosphate + CTP + H(+) = 4-CDP-2-C-methyl-D-erythritol + diphosphate. It carries out the reaction 4-CDP-2-C-methyl-D-erythritol 2-phosphate = 2-C-methyl-D-erythritol 2,4-cyclic diphosphate + CMP. The protein operates within isoprenoid biosynthesis; isopentenyl diphosphate biosynthesis via DXP pathway; isopentenyl diphosphate from 1-deoxy-D-xylulose 5-phosphate: step 2/6. It participates in isoprenoid biosynthesis; isopentenyl diphosphate biosynthesis via DXP pathway; isopentenyl diphosphate from 1-deoxy-D-xylulose 5-phosphate: step 4/6. Functionally, bifunctional enzyme that catalyzes the formation of 4-diphosphocytidyl-2-C-methyl-D-erythritol from CTP and 2-C-methyl-D-erythritol 4-phosphate (MEP) (IspD), and catalyzes the conversion of 4-diphosphocytidyl-2-C-methyl-D-erythritol 2-phosphate (CDP-ME2P) to 2-C-methyl-D-erythritol 2,4-cyclodiphosphate (ME-CPP) with a corresponding release of cytidine 5-monophosphate (CMP) (IspF). The protein is Bifunctional enzyme IspD/IspF of Rhizobium etli (strain CIAT 652).